We begin with the raw amino-acid sequence, 281 residues long: Imidazole glycerol phosphate synthase subunit HisF (281 aa).

Active-site residues include D12 and D131. A disordered region spans residues V256–G281.

The protein belongs to the HisA/HisF family. As to quaternary structure, heterodimer of HisH and HisF.

Its subcellular location is the cytoplasm. It carries out the reaction 5-[(5-phospho-1-deoxy-D-ribulos-1-ylimino)methylamino]-1-(5-phospho-beta-D-ribosyl)imidazole-4-carboxamide + L-glutamine = D-erythro-1-(imidazol-4-yl)glycerol 3-phosphate + 5-amino-1-(5-phospho-beta-D-ribosyl)imidazole-4-carboxamide + L-glutamate + H(+). The protein operates within amino-acid biosynthesis; L-histidine biosynthesis; L-histidine from 5-phospho-alpha-D-ribose 1-diphosphate: step 5/9. IGPS catalyzes the conversion of PRFAR and glutamine to IGP, AICAR and glutamate. The HisF subunit catalyzes the cyclization activity that produces IGP and AICAR from PRFAR using the ammonia provided by the HisH subunit. The protein is Imidazole glycerol phosphate synthase subunit HisF of Thermosynechococcus vestitus (strain NIES-2133 / IAM M-273 / BP-1).